A 95-amino-acid chain; its full sequence is Co-chaperonin GroES (95 aa).

It belongs to the GroES chaperonin family. As to quaternary structure, heptamer of 7 subunits arranged in a ring. Interacts with the chaperonin GroEL.

It localises to the cytoplasm. Together with the chaperonin GroEL, plays an essential role in assisting protein folding. The GroEL-GroES system forms a nano-cage that allows encapsulation of the non-native substrate proteins and provides a physical environment optimized to promote and accelerate protein folding. GroES binds to the apical surface of the GroEL ring, thereby capping the opening of the GroEL channel. The polypeptide is Co-chaperonin GroES (Caldicellulosiruptor bescii (strain ATCC BAA-1888 / DSM 6725 / KCTC 15123 / Z-1320) (Anaerocellum thermophilum)).